The chain runs to 103 residues: Cell division protein FtsB (103 aa).

Topologically, residues Met1–Lys3 are cytoplasmic. Residues Leu4–Phe21 form a helical membrane-spanning segment. Topologically, residues Gly22–Arg103 are periplasmic. Positions Arg31–Ala71 form a coiled coil.

Belongs to the FtsB family. Part of a complex composed of FtsB, FtsL and FtsQ.

Its subcellular location is the cell inner membrane. In terms of biological role, essential cell division protein. May link together the upstream cell division proteins, which are predominantly cytoplasmic, with the downstream cell division proteins, which are predominantly periplasmic. This is Cell division protein FtsB from Escherichia coli O81 (strain ED1a).